Reading from the N-terminus, the 394-residue chain is Phosphoglycerate kinase (394 aa).

Substrate contacts are provided by residues 21-23, arginine 37, 60-63, arginine 119, and arginine 152; these read DFN and HLGR. ATP contacts are provided by residues lysine 202, glutamate 324, and 350–353; that span reads GGDS.

It belongs to the phosphoglycerate kinase family. In terms of assembly, monomer.

It is found in the cytoplasm. It catalyses the reaction (2R)-3-phosphoglycerate + ATP = (2R)-3-phospho-glyceroyl phosphate + ADP. It participates in carbohydrate degradation; glycolysis; pyruvate from D-glyceraldehyde 3-phosphate: step 2/5. The polypeptide is Phosphoglycerate kinase (Herpetosiphon aurantiacus (strain ATCC 23779 / DSM 785 / 114-95)).